A 281-amino-acid polypeptide reads, in one-letter code: Bifunctional protein FolD (281 aa).

Residues 165–167, Thr-192, and Val-233 contribute to the NADP(+) site; that span reads GRG.

This sequence belongs to the tetrahydrofolate dehydrogenase/cyclohydrolase family. Homodimer.

The enzyme catalyses (6R)-5,10-methylene-5,6,7,8-tetrahydrofolate + NADP(+) = (6R)-5,10-methenyltetrahydrofolate + NADPH. It catalyses the reaction (6R)-5,10-methenyltetrahydrofolate + H2O = (6R)-10-formyltetrahydrofolate + H(+). It participates in one-carbon metabolism; tetrahydrofolate interconversion. In terms of biological role, catalyzes the oxidation of 5,10-methylenetetrahydrofolate to 5,10-methenyltetrahydrofolate and then the hydrolysis of 5,10-methenyltetrahydrofolate to 10-formyltetrahydrofolate. In Mycobacterium avium (strain 104), this protein is Bifunctional protein FolD.